We begin with the raw amino-acid sequence, 465 residues long: Asparagine--tRNA ligase (465 aa).

The protein belongs to the class-II aminoacyl-tRNA synthetase family. Homodimer.

Its subcellular location is the cytoplasm. The catalysed reaction is tRNA(Asn) + L-asparagine + ATP = L-asparaginyl-tRNA(Asn) + AMP + diphosphate + H(+). The sequence is that of Asparagine--tRNA ligase from Pseudoalteromonas translucida (strain TAC 125).